The sequence spans 767 residues: Photosystem I P700 chlorophyll a apoprotein A1 (767 aa).

The next 8 membrane-spanning stretches (helical) occupy residues 72–95 (IFSA…FHGA), 158–181 (LMSL…FHYH), 197–221 (LNHH…HVSL), 305–323 (IAHH…GHMY), 364–387 (WHAQ…QHMY), 403–429 (IGLF…IAMI), 451–473 (ALIS…LYIH), and 548–566 (FMVH…LILL). Residues cysteine 590 and cysteine 599 each contribute to the [4Fe-4S] cluster site. Helical transmembrane passes span 606-627 (HVFL…HFSW) and 681-703 (TSAY…MFLF). Histidine 692 contacts chlorophyll a'. Chlorophyll a contacts are provided by methionine 700 and tyrosine 708. A phylloquinone-binding site is contributed by tryptophan 709. A helical transmembrane segment spans residues 741–761 (AVGVAHYLLGGIATTWAFFHA).

It belongs to the PsaA/PsaB family. The PsaA/B heterodimer binds the P700 chlorophyll special pair and subsequent electron acceptors. PSI consists of a core antenna complex that captures photons, and an electron transfer chain that converts photonic excitation into a charge separation. The cyanobacterial PSI reaction center is composed of one copy each of PsaA,B,C,D,E,F,I,J,K,L,M and X, and forms trimeric complexes. It depends on PSI electron transfer chain: 5 chlorophyll a, 1 chlorophyll a', 2 phylloquinones and 3 4Fe-4S clusters. PSI core antenna: 90 chlorophyll a, 22 carotenoids, 3 phospholipids and 1 galactolipid. P700 is a chlorophyll a/chlorophyll a' dimer, A0 is one or more chlorophyll a, A1 is one or both phylloquinones and FX is a shared 4Fe-4S iron-sulfur center. as a cofactor.

The protein localises to the cellular thylakoid membrane. The catalysed reaction is reduced [plastocyanin] + hnu + oxidized [2Fe-2S]-[ferredoxin] = oxidized [plastocyanin] + reduced [2Fe-2S]-[ferredoxin]. PsaA and PsaB bind P700, the primary electron donor of photosystem I (PSI), as well as the electron acceptors A0, A1 and FX. PSI is a plastocyanin/cytochrome c6-ferredoxin oxidoreductase, converting photonic excitation into a charge separation, which transfers an electron from the donor P700 chlorophyll pair to the spectroscopically characterized acceptors A0, A1, FX, FA and FB in turn. Oxidized P700 is reduced on the lumenal side of the thylakoid membrane by plastocyanin or cytochrome c6. The chain is Photosystem I P700 chlorophyll a apoprotein A1 from Synechococcus sp. (strain WH7803).